The chain runs to 475 residues: Phosphoglucosamine mutase (475 aa).

The active-site Phosphoserine intermediate is S126. S126, D265, D267, and D269 together coordinate Mg(2+). Phosphoserine is present on S126.

This sequence belongs to the phosphohexose mutase family. Mg(2+) serves as cofactor. Activated by phosphorylation.

It catalyses the reaction alpha-D-glucosamine 1-phosphate = D-glucosamine 6-phosphate. Catalyzes the conversion of glucosamine-6-phosphate to glucosamine-1-phosphate. The protein is Phosphoglucosamine mutase of Synechococcus sp. (strain ATCC 27144 / PCC 6301 / SAUG 1402/1) (Anacystis nidulans).